Consider the following 78-residue polypeptide: Short neurotoxin OH-5 (78 aa).

Positions 1-21 (MKNLLLTFLVVTIVCLDLGYT) are cleaved as a signal peptide. 4 cysteine pairs are disulfide-bonded: Cys24–Cys40, Cys33–Cys58, Cys62–Cys70, and Cys71–Cys76.

The protein belongs to the three-finger toxin family. Short-chain subfamily. In terms of tissue distribution, expressed by the venom gland.

The protein localises to the secreted. This three-finger toxin binds and inhibits the nicotinic acetylcholine receptor (nAChR). The protein is Short neurotoxin OH-5 of Ophiophagus hannah (King cobra).